We begin with the raw amino-acid sequence, 189 residues long: UPF0301 protein A1C_00165 (189 aa).

The protein belongs to the UPF0301 (AlgH) family.

This Rickettsia akari (strain Hartford) protein is UPF0301 protein A1C_00165.